A 427-amino-acid polypeptide reads, in one-letter code: 11-beta-hydroxysteroid dehydrogenase type 2 (427 aa).

82–111 serves as a coordination point for NAD(+); that stretch reads TRAVLITGCDSGFGNATAKKLDAMGFTVLA. Ser219 serves as a coordination point for substrate. Catalysis depends on Tyr232, which acts as the Proton acceptor.

Belongs to the short-chain dehydrogenases/reductases (SDR) family. In terms of assembly, interacts with ligand-free cytoplasmic NR3C2. As to expression, highly expressed in the kidney and adrenal and at lower levels in the colon.

It localises to the microsome. It is found in the endoplasmic reticulum. The catalysed reaction is an 11beta-hydroxysteroid + NAD(+) = an 11-oxosteroid + NADH + H(+). It catalyses the reaction corticosterone + NAD(+) = 11-dehydrocorticosterone + NADH + H(+). The enzyme catalyses cortisol + NAD(+) = cortisone + NADH + H(+). It carries out the reaction 11beta,17beta-dihydroxyandrost-4-ene-3-one + NAD(+) = 17beta-hydroxyandrost-4-ene-3,11-dione + NADH + H(+). The catalysed reaction is 11beta-hydroxyandrost-4-ene-3,17-dione + NAD(+) = androst-4-ene-3,11,17-trione + NADH + H(+). Its pathway is steroid metabolism. Its activity is regulated as follows. Inhibited by glycyrrhetinic acid, carbenoloxone, 11-alpha-OH-progesterone and 11-beta-OH-progesterone. In terms of biological role, catalyzes the conversion of biologically active 11beta-hydroxyglucocorticoids (11beta-hydroxysteroid) such as cortisol, to inactive 11-ketoglucocorticoids (11-oxosteroid) such as cortisone, in the presence of NAD(+). Functions as a dehydrogenase (oxidase), thereby decreasing the concentration of active glucocorticoids, thus protecting the nonselective mineralocorticoid receptor from occupation by glucocorticoids. Plays an important role in maintaining glucocorticoids balance during preimplantation and protects the fetus from excessive maternal corticosterone exposure. Catalyzes the oxidation of 11beta-hydroxytestosterone (11beta,17beta-dihydroxyandrost-4-ene-3-one) to 11-ketotestosterone (17beta-hydroxyandrost-4-ene-3,11-dione), a major bioactive androgen. Catalyzes the conversion of 11beta-hydroxyandrostenedione (11beta-hydroxyandrost-4-ene-3,17-dione) to 11-ketoandrostenedione (androst-4-ene-3,11,17-trione), which can be further metabolized to 11-ketotestosterone. Converts 7-beta-25-dihydroxycholesterol to 7-oxo-25-hydroxycholesterol in vitro. 7-beta-25-dihydroxycholesterol (not 7-oxo-25-hydroxycholesterol) acts as a ligand for the G-protein-coupled receptor (GPCR) Epstein-Barr virus-induced gene 2 (EBI2) and may thereby regulate immune cell migration. May protect ovulating oocytes and fertilizing spermatozoa from the adverse effects of cortisol. The chain is 11-beta-hydroxysteroid dehydrogenase type 2 (HSD11B2) from Ovis aries (Sheep).